We begin with the raw amino-acid sequence, 355 residues long: Histidinol-phosphate aminotransferase 2 (355 aa).

Position 213 is an N6-(pyridoxal phosphate)lysine (lysine 213).

This sequence belongs to the class-II pyridoxal-phosphate-dependent aminotransferase family. Histidinol-phosphate aminotransferase subfamily. In terms of assembly, homodimer. Requires pyridoxal 5'-phosphate as cofactor.

It carries out the reaction L-histidinol phosphate + 2-oxoglutarate = 3-(imidazol-4-yl)-2-oxopropyl phosphate + L-glutamate. It functions in the pathway amino-acid biosynthesis; L-histidine biosynthesis; L-histidine from 5-phospho-alpha-D-ribose 1-diphosphate: step 7/9. The sequence is that of Histidinol-phosphate aminotransferase 2 from Burkholderia lata (strain ATCC 17760 / DSM 23089 / LMG 22485 / NCIMB 9086 / R18194 / 383).